The primary structure comprises 172 residues: Small ribosomal subunit protein uS5 (172 aa).

The S5 DRBM domain occupies 11–74; it reads LFESVVDIAR…RKAKGAMIRF (64 aa).

This sequence belongs to the universal ribosomal protein uS5 family. Part of the 30S ribosomal subunit. Contacts proteins S4 and S8.

With S4 and S12 plays an important role in translational accuracy. Its function is as follows. Located at the back of the 30S subunit body where it stabilizes the conformation of the head with respect to the body. This is Small ribosomal subunit protein uS5 from Neorickettsia sennetsu (strain ATCC VR-367 / Miyayama) (Ehrlichia sennetsu).